A 122-amino-acid chain; its full sequence is UPF0102 protein VV1_0590 (122 aa).

This sequence belongs to the UPF0102 family.

The polypeptide is UPF0102 protein VV1_0590 (Vibrio vulnificus (strain CMCP6)).